The sequence spans 122 residues: Large ribosomal subunit protein uL14 (122 aa).

This sequence belongs to the universal ribosomal protein uL14 family. In terms of assembly, part of the 50S ribosomal subunit. Forms a cluster with proteins L3 and L19. In the 70S ribosome, L14 and L19 interact and together make contacts with the 16S rRNA in bridges B5 and B8.

Binds to 23S rRNA. Forms part of two intersubunit bridges in the 70S ribosome. The chain is Large ribosomal subunit protein uL14 from Rubrobacter xylanophilus (strain DSM 9941 / JCM 11954 / NBRC 16129 / PRD-1).